We begin with the raw amino-acid sequence, 1227 residues long: RNA-binding protein 20 (1227 aa).

Disordered stretches follow at residues 1–58 and 289–374; these read MVLA…QAGL and GSHV…SKQG. The span at 27 to 42 shows a compositional bias: low complexity; it reads PGARASPAPSGPRGMQ. Pro residues predominate over residues 43-56; that stretch reads QPPPPPQPPPPPQA. Residues 313 to 331 are compositionally biased toward polar residues; sequence QGTNSQWESPHGFSGQSKP. Residues 409–443 form a U1-type zinc finger; that stretch reads HLPHICSICDKKVFDLKDWELHVKGKLHAQKCLVF. Ser-498 carries the phosphoserine modification. One can recognise an RRM domain in the interval 518–593; it reads RVVHICNLPE…EKLLIRMSKR (76 aa). The span at 624–634 shows a compositional bias: basic and acidic residues; sequence EADRYGPERPR. Disordered stretches follow at residues 624-906 and 977-1089; these read EADR…TNME and SLKS…ASPP. Residues 628-655 are RS; sequence YGPERPRSRSPVSRSLSPRSHTPSFTSC. Phosphoserine occurs at positions 635, 637, 640, 642, 660, and 679. The span at 636–660 shows a compositional bias: low complexity; sequence RSPVSRSLSPRSHTPSFTSCSSSHS. Composition is skewed to basic and acidic residues over residues 674-709 and 716-738; these read DSWE…PWAH and RQLD…EKYP. Residues 741 to 752 show a composition bias toward polar residues; that stretch reads GSPNLPHSVSSY. A Phosphoserine modification is found at Ser-742. 3 stretches are compositionally biased toward basic and acidic residues: residues 753 to 772, 784 to 807, and 816 to 856; these read KSRE…DKYL, RKDE…EDGL, and EGAK…KEEQ. Phosphoserine is present on Ser-801. Ser-865, Ser-876, Ser-891, Ser-893, Ser-977, Ser-980, and Ser-1013 each carry phosphoserine. Over residues 868-888 the composition is skewed to basic and acidic residues; sequence RQEKEAEFSDPENTRTKKEQD. Over residues 1024-1036 the composition is skewed to basic and acidic residues; the sequence is CYEKEAKGVESSD. 5 positions are modified to phosphoserine: Ser-1048, Ser-1060, Ser-1080, Ser-1115, and Ser-1120. The Matrin-type zinc finger occupies 1161 to 1192; the sequence is FYCKLCGLFYTSEETAKMSHCRSAVHYRNLQK. Residues 1201–1215 show a composition bias toward basic and acidic residues; it reads GLKETEGADSPRPED. A disordered region spans residues 1201-1227; that stretch reads GLKETEGADSPRPEDSGIVPRFERKKL. Position 1210 is a phosphoserine (Ser-1210).

In terms of assembly, associates with components of the U1 and U2 U1 small nuclear ribonucleoprotein complexes. In terms of processing, phosphorylation regulates the subcellular localization. Phosphorylation of Ser-635 and Ser-637 in the RS (arginine/serine-rich) region promotes nuclear localization of the protein. In contrast, phosphorylation of the C-terminal disordered region promotes localization to cytoplasmic ribonucleoprotein granules. As to expression, mainly expressed in the heart. Also expressed in skeletal muscle tissues, ovary, small intestine and colon.

It localises to the nucleus. It is found in the cytoplasm. Its subcellular location is the cytoplasmic ribonucleoprotein granule. In terms of biological role, RNA-binding protein that acts as a regulator of mRNA splicing of a subset of genes encoding key structural proteins involved in cardiac development, such as TTN (Titin), CACNA1C, CAMK2D or PDLIM5/ENH. Acts as a repressor of mRNA splicing: specifically binds the 5'UCUU-3' motif that is predominantly found within intronic sequences of pre-mRNAs, leading to the exclusion of specific exons in target transcripts. RBM20-mediated exon skipping is hormone-dependent and is essential for TTN isoform transition in both cardiac and skeletal muscles. RBM20-mediated exon skipping of TTN provides substrates for the formation of circular RNA (circRNAs) from the TTN transcripts. Together with RBM24, promotes the expression of short isoforms of PDLIM5/ENH in cardiomyocytes. The sequence is that of RNA-binding protein 20 from Homo sapiens (Human).